Here is a 148-residue protein sequence, read N- to C-terminus: HTH-type transcriptional regulator Rv2324 (148 aa).

One can recognise an HTH asnC-type domain in the interval leucine 4 to asparagine 65. Residues phenylalanine 23 to aspartate 42 constitute a DNA-binding region (H-T-H motif).

Homodimer. Forms oligomers.

The DNA-binding activity of Rv2324 is modulated by interaction of Rv2324 with amino acids. Aspartate is the only effector amino acid that completely abolishes DNA binding. The majority of amino acids induce a dimer-tetramer or dimer-hexamer oligomeric transition. In response to amino-acid binding, adopts an open quaternary association, which is a part of the functional requirement to bind to non-symmetrically distributed target DNA binding sites. Its function is as follows. Transcriptional regulator involved in growth, DNA replication and damage control. Plays a crucial role in regulating survival and growth of M.tuberculosis. Could function as a global regulator in both the latent/persistent and active phases of growth. Binds to its own promoter region and to promoters of multiple metabolic genes, such as serB2, lat, ald and roc operon. In vitro, interacts with intrinsically curved and non-curved DNA molecules, and with both supercoiled and linear DNA, with higher affinity for supercoiled DNA. Binds to DNA recombination, replication and repair intermediates. The protein is HTH-type transcriptional regulator Rv2324 of Mycobacterium tuberculosis (strain ATCC 25618 / H37Rv).